Reading from the N-terminus, the 78-residue chain is Acyl carrier protein (78 aa).

The Carrier domain occupies Met-1–Thr-75. Ser-35 carries the post-translational modification O-(pantetheine 4'-phosphoryl)serine.

Belongs to the acyl carrier protein (ACP) family. Post-translationally, 4'-phosphopantetheine is transferred from CoA to a specific serine of apo-ACP by AcpS. This modification is essential for activity because fatty acids are bound in thioester linkage to the sulfhydryl of the prosthetic group.

It localises to the cytoplasm. It functions in the pathway lipid metabolism; fatty acid biosynthesis. Carrier of the growing fatty acid chain in fatty acid biosynthesis. The sequence is that of Acyl carrier protein (acpP) from Shigella flexneri.